Here is a 366-residue protein sequence, read N- to C-terminus: Chitoporin (366 aa).

A signal peptide spans 1 to 23; the sequence is MDKMFKRTVIGAAVALASTGLMA.

It belongs to the Gram-negative porin family.

It is found in the cell outer membrane. Involved in the uptake of chitosugars. In Vibrio furnissii, this protein is Chitoporin (chiP).